We begin with the raw amino-acid sequence, 326 residues long: Glycerol-3-phosphate dehydrogenase [NAD(P)+] (326 aa).

Residues Ser-10, Phe-11, Arg-31, and Lys-108 each coordinate NADPH. Sn-glycerol 3-phosphate-binding residues include Lys-108, Gly-136, and Ser-138. Ala-140 is a binding site for NADPH. The sn-glycerol 3-phosphate site is built by Lys-191, Asp-246, Ser-256, Arg-257, and Asn-258. Catalysis depends on Lys-191, which acts as the Proton acceptor. Arg-257 is a binding site for NADPH. The NADPH site is built by Ile-281 and Glu-283.

The protein belongs to the NAD-dependent glycerol-3-phosphate dehydrogenase family.

It localises to the cytoplasm. The catalysed reaction is sn-glycerol 3-phosphate + NAD(+) = dihydroxyacetone phosphate + NADH + H(+). It catalyses the reaction sn-glycerol 3-phosphate + NADP(+) = dihydroxyacetone phosphate + NADPH + H(+). It participates in membrane lipid metabolism; glycerophospholipid metabolism. Its function is as follows. Catalyzes the reduction of the glycolytic intermediate dihydroxyacetone phosphate (DHAP) to sn-glycerol 3-phosphate (G3P), the key precursor for phospholipid synthesis. In Ehrlichia chaffeensis (strain ATCC CRL-10679 / Arkansas), this protein is Glycerol-3-phosphate dehydrogenase [NAD(P)+].